The primary structure comprises 440 residues: Proline--tRNA ligase (440 aa).

This sequence belongs to the class-II aminoacyl-tRNA synthetase family. ProS type 2 subfamily. As to quaternary structure, homodimer.

It is found in the cytoplasm. It catalyses the reaction tRNA(Pro) + L-proline + ATP = L-prolyl-tRNA(Pro) + AMP + diphosphate. Functionally, catalyzes the attachment of proline to tRNA(Pro) in a two-step reaction: proline is first activated by ATP to form Pro-AMP and then transferred to the acceptor end of tRNA(Pro). This Agrobacterium fabrum (strain C58 / ATCC 33970) (Agrobacterium tumefaciens (strain C58)) protein is Proline--tRNA ligase.